The following is a 1024-amino-acid chain: Error-prone DNA polymerase (1024 aa).

This sequence belongs to the DNA polymerase type-C family. DnaE2 subfamily.

The protein resides in the cytoplasm. The enzyme catalyses DNA(n) + a 2'-deoxyribonucleoside 5'-triphosphate = DNA(n+1) + diphosphate. DNA polymerase involved in damage-induced mutagenesis and translesion synthesis (TLS). It is not the major replicative DNA polymerase. The chain is Error-prone DNA polymerase from Vibrio parahaemolyticus serotype O3:K6 (strain RIMD 2210633).